Consider the following 191-residue polypeptide: Negative modulator of initiation of replication (191 aa).

Positions 96–97 (AV) are interaction with DNA.

This sequence belongs to the SeqA family. Homodimer. Polymerizes to form helical filaments.

It localises to the cytoplasm. Functionally, negative regulator of replication initiation, which contributes to regulation of DNA replication and ensures that replication initiation occurs exactly once per chromosome per cell cycle. Binds to pairs of hemimethylated GATC sequences in the oriC region, thus preventing assembly of replication proteins and re-initiation at newly replicated origins. Repression is relieved when the region becomes fully methylated. This is Negative modulator of initiation of replication from Shewanella amazonensis (strain ATCC BAA-1098 / SB2B).